A 332-amino-acid polypeptide reads, in one-letter code: Succinylglutamate desuccinylase (332 aa).

Zn(2+)-binding residues include histidine 59, glutamate 62, and histidine 151. The active site involves glutamate 215.

It belongs to the AspA/AstE family. Succinylglutamate desuccinylase subfamily. The cofactor is Zn(2+).

The enzyme catalyses N-succinyl-L-glutamate + H2O = L-glutamate + succinate. It functions in the pathway amino-acid degradation; L-arginine degradation via AST pathway; L-glutamate and succinate from L-arginine: step 5/5. Functionally, transforms N(2)-succinylglutamate into succinate and glutamate. This Pseudomonas aeruginosa (strain UCBPP-PA14) protein is Succinylglutamate desuccinylase.